Reading from the N-terminus, the 216-residue chain is Large ribosomal subunit protein uL3 (216 aa).

The tract at residues 137-157 (GASHGAHKNHRKPGSIGGAST) is disordered.

The protein belongs to the universal ribosomal protein uL3 family. Part of the 50S ribosomal subunit. Forms a cluster with proteins L14 and L19.

One of the primary rRNA binding proteins, it binds directly near the 3'-end of the 23S rRNA, where it nucleates assembly of the 50S subunit. The sequence is that of Large ribosomal subunit protein uL3 from Paenarthrobacter aurescens (strain TC1).